Here is a 133-residue protein sequence, read N- to C-terminus: Meiotically up-regulated gene 15 protein (133 aa).

It localises to the cytoplasm. Its subcellular location is the nucleus. Functionally, has a role in meiosis. The protein is Meiotically up-regulated gene 15 protein (mug15) of Schizosaccharomyces pombe (strain 972 / ATCC 24843) (Fission yeast).